Consider the following 527-residue polypeptide: Bifunctional purine biosynthesis protein PurH (527 aa).

Residues 1–149 enclose the MGS-like domain; sequence MASDFLPVRR…KNFARVAVAT (149 aa).

Belongs to the PurH family.

It carries out the reaction (6R)-10-formyltetrahydrofolate + 5-amino-1-(5-phospho-beta-D-ribosyl)imidazole-4-carboxamide = 5-formamido-1-(5-phospho-D-ribosyl)imidazole-4-carboxamide + (6S)-5,6,7,8-tetrahydrofolate. The catalysed reaction is IMP + H2O = 5-formamido-1-(5-phospho-D-ribosyl)imidazole-4-carboxamide. It participates in purine metabolism; IMP biosynthesis via de novo pathway; 5-formamido-1-(5-phospho-D-ribosyl)imidazole-4-carboxamide from 5-amino-1-(5-phospho-D-ribosyl)imidazole-4-carboxamide (10-formyl THF route): step 1/1. It functions in the pathway purine metabolism; IMP biosynthesis via de novo pathway; IMP from 5-formamido-1-(5-phospho-D-ribosyl)imidazole-4-carboxamide: step 1/1. The protein is Bifunctional purine biosynthesis protein PurH of Xanthomonas oryzae pv. oryzae (strain KACC10331 / KXO85).